We begin with the raw amino-acid sequence, 313 residues long: Ribosomal RNA small subunit methyltransferase H (313 aa).

Residues 35 to 37 (GGH), D55, F79, D101, and Q108 contribute to the S-adenosyl-L-methionine site.

Belongs to the methyltransferase superfamily. RsmH family.

Its subcellular location is the cytoplasm. The enzyme catalyses cytidine(1402) in 16S rRNA + S-adenosyl-L-methionine = N(4)-methylcytidine(1402) in 16S rRNA + S-adenosyl-L-homocysteine + H(+). In terms of biological role, specifically methylates the N4 position of cytidine in position 1402 (C1402) of 16S rRNA. The polypeptide is Ribosomal RNA small subunit methyltransferase H (Escherichia coli O139:H28 (strain E24377A / ETEC)).